Reading from the N-terminus, the 56-residue chain is Large ribosomal subunit protein bL33 (56 aa).

Belongs to the bacterial ribosomal protein bL33 family.

The protein is Large ribosomal subunit protein bL33 of Helicobacter hepaticus (strain ATCC 51449 / 3B1).